The sequence spans 288 residues: Oxaloacetate decarboxylase (288 aa).

S47 contacts substrate. D85 is a Mg(2+) binding site. Residues R156 and H232 each contribute to the substrate site.

The protein belongs to the isocitrate lyase/PEP mutase superfamily. Oxaloacetate decarboxylase family. In terms of assembly, homotetramer; dimer of dimers. Mg(2+) is required as a cofactor.

It carries out the reaction oxaloacetate + H(+) = pyruvate + CO2. Functionally, catalyzes the decarboxylation of oxaloacetate into pyruvate. Seems to play a role in maintaining cellular concentrations of bicarbonate and pyruvate. The protein is Oxaloacetate decarboxylase of Bradyrhizobium sp. (strain BTAi1 / ATCC BAA-1182).